The sequence spans 134 residues: Translation initiation factor 5A (134 aa).

K36 is subject to Hypusine.

Belongs to the eIF-5A family.

Its subcellular location is the cytoplasm. In terms of biological role, functions by promoting the formation of the first peptide bond. This is Translation initiation factor 5A (eIF5A) from Korarchaeum cryptofilum (strain OPF8).